The primary structure comprises 617 residues: V-type proton ATPase catalytic subunit A (617 aa).

250–257 (GAFGCGKT) serves as a coordination point for ATP. Phosphoserine; by AMPK is present on Ser-384.

Belongs to the ATPase alpha/beta chains family. In terms of assembly, V-ATPase is a heteromultimeric enzyme made up of two complexes: the ATP-hydrolytic V1 complex and the proton translocation V0 complex. The V1 complex consists of three catalytic AB heterodimers that form a heterohexamer, three peripheral stalks each consisting of EG heterodimers, one central rotor including subunits D and F, and the regulatory subunits C and H. The proton translocation complex V0 consists of the proton transport subunit a, a ring of proteolipid subunits c9c'', rotary subunit d, subunits e and f, and the accessory subunits ATP6AP1/Ac45 and ATP6AP2/PRR. Interacts with the V0 complex V-ATPase subunit a4 ATP6V0A4. Interacts with WFS1. Interacts with alpha-crystallin B chain/CRYAB and with MTOR, forming a ternary complex. In terms of processing, phosphorylation at Ser-384 by AMPK down-regulates its enzyme activity.

It localises to the cytoplasm. It is found in the cytosol. The protein resides in the cytoplasmic vesicle. The protein localises to the secretory vesicle. Its subcellular location is the clathrin-coated vesicle membrane. It localises to the lysosome. It carries out the reaction ATP + H2O + 4 H(+)(in) = ADP + phosphate + 5 H(+)(out). Its activity is regulated as follows. ATP hydrolysis occurs at the interface between the nucleotide-binding domains of subunits A and B. ATP hydrolysis triggers a conformational change in the subunits D and F, which induces a shift of subunit d. The c-ring is subsequently rotated and results in a continuous proton translocation across the membrane. Catalytic subunit of the V1 complex of vacuolar(H+)-ATPase (V-ATPase), a multisubunit enzyme composed of a peripheral complex (V1) that hydrolyzes ATP and a membrane integral complex (V0) that translocates protons. V-ATPase is responsible for acidifying and maintaining the pH of intracellular compartments and in some cell types, is targeted to the plasma membrane, where it is responsible for acidifying the extracellular environment. In aerobic conditions, involved in intracellular iron homeostasis, thus triggering the activity of Fe(2+) prolyl hydroxylase (PHD) enzymes, and leading to HIF1A hydroxylation and subsequent proteasomal degradation. May play a role in neurite development and synaptic connectivity. The protein is V-type proton ATPase catalytic subunit A (Atp6v1a) of Mus musculus (Mouse).